The sequence spans 401 residues: Formate-dependent phosphoribosylglycinamide formyltransferase (401 aa).

N(1)-(5-phospho-beta-D-ribosyl)glycinamide is bound by residues 22–23 and Glu-82; that span reads EL. ATP is bound by residues Arg-115, Lys-157, 162–167, 197–200, and Glu-205; these read SSGKGQ and EGFI. The ATP-grasp domain maps to 120–315; sequence RLAAESLGLP…EFELHARAIL (196 aa). Mg(2+) is bound by residues Glu-274 and Glu-286. Residues Asp-293, Lys-362, and 369–370 contribute to the N(1)-(5-phospho-beta-D-ribosyl)glycinamide site; that span reads RR.

It belongs to the PurK/PurT family. In terms of assembly, homodimer.

It carries out the reaction N(1)-(5-phospho-beta-D-ribosyl)glycinamide + formate + ATP = N(2)-formyl-N(1)-(5-phospho-beta-D-ribosyl)glycinamide + ADP + phosphate + H(+). The protein operates within purine metabolism; IMP biosynthesis via de novo pathway; N(2)-formyl-N(1)-(5-phospho-D-ribosyl)glycinamide from N(1)-(5-phospho-D-ribosyl)glycinamide (formate route): step 1/1. Involved in the de novo purine biosynthesis. Catalyzes the transfer of formate to 5-phospho-ribosyl-glycinamide (GAR), producing 5-phospho-ribosyl-N-formylglycinamide (FGAR). Formate is provided by PurU via hydrolysis of 10-formyl-tetrahydrofolate. The chain is Formate-dependent phosphoribosylglycinamide formyltransferase from Cupriavidus taiwanensis (strain DSM 17343 / BCRC 17206 / CCUG 44338 / CIP 107171 / LMG 19424 / R1) (Ralstonia taiwanensis (strain LMG 19424)).